Consider the following 177-residue polypeptide: Putative HVA22-like protein g (177 aa).

Positions 145–165 (QSTPKSKAEEKKETTIPKLDD) are disordered. A compositionally biased stretch (basic and acidic residues) spans 150–165 (SKAEEKKETTIPKLDD).

This sequence belongs to the DP1 family.

This chain is Putative HVA22-like protein g (HVA22G), found in Arabidopsis thaliana (Mouse-ear cress).